A 157-amino-acid chain; its full sequence is MTEAANSTPAQPEFQIQRIYVKDVSFEAPNTPVVFQKEWQPEIKLDMDTQTQVLGQDVYEVALTLTVTCKLGEETAFLCEVKQAGIFTAANLDAQNLAHCLGAFCPNILFPYARETVAGLVSRGSFPQLNLAPVNFDALFASHIAQLEAEQAKAGVQ.

Belongs to the SecB family. Homotetramer, a dimer of dimers. One homotetramer interacts with 1 SecA dimer.

The protein localises to the cytoplasm. One of the proteins required for the normal export of preproteins out of the cell cytoplasm. It is a molecular chaperone that binds to a subset of precursor proteins, maintaining them in a translocation-competent state. It also specifically binds to its receptor SecA. In Tolumonas auensis (strain DSM 9187 / NBRC 110442 / TA 4), this protein is Protein-export protein SecB.